The sequence spans 256 residues: UPF0246 protein Swoo_1284 (256 aa).

The protein belongs to the UPF0246 family.

This Shewanella woodyi (strain ATCC 51908 / MS32) protein is UPF0246 protein Swoo_1284.